Reading from the N-terminus, the 156-residue chain is Peptide deformylase 1 (156 aa).

Fe cation is bound by residues C90 and H132. The active site involves E133. A Fe cation-binding site is contributed by H136.

This sequence belongs to the polypeptide deformylase family. Fe(2+) is required as a cofactor.

The catalysed reaction is N-terminal N-formyl-L-methionyl-[peptide] + H2O = N-terminal L-methionyl-[peptide] + formate. Its function is as follows. Removes the formyl group from the N-terminal Met of newly synthesized proteins. Requires at least a dipeptide for an efficient rate of reaction. N-terminal L-methionine is a prerequisite for activity but the enzyme has broad specificity at other positions. The polypeptide is Peptide deformylase 1 (Bacillus anthracis).